The primary structure comprises 213 residues: MARKETVEAVKKALASRPKRNFSESVDLAINLKNIDMSQPKNRVDEDIILPSGLGKTIKVAVFAKGEVAVNAEKAGADYVFPPEEIEKLGADKPRAKKLASEVNFFIAETAYMPTIGKRLGTVLGPRGKMPAPLPPQADVTALITRQKKSIKIRSKDRLTFHATIGTETMTPEEIAENIDAIIKRLETKLEKGKQNIHAIYVKTTMGPAVKVM.

It belongs to the universal ribosomal protein uL1 family. As to quaternary structure, part of the 50S ribosomal subunit.

Binds directly to 23S rRNA. Probably involved in E site tRNA release. Its function is as follows. Protein L1 is also a translational repressor protein, it controls the translation of its operon by binding to its mRNA. The protein is Large ribosomal subunit protein uL1 of Methanocella arvoryzae (strain DSM 22066 / NBRC 105507 / MRE50).